The chain runs to 381 residues: Cytochrome b (381 aa).

4 helical membrane passes run 34–54 (FGSL…FLAM), 78–99 (WLIR…YLHI), 114–134 (WNIG…GYVL), and 179–199 (FFAF…IHLL). Residues His84 and His98 each coordinate heme b. Heme b contacts are provided by His183 and His197. Position 202 (His202) interacts with a ubiquinone. The next 4 membrane-spanning stretches (helical) occupy residues 227 to 247 (YKDL…ALFM), 289 to 309 (LGGV…PLLH), 321 to 341 (LTQI…WIGG), and 348 to 368 (FITV…IIMP).

Belongs to the cytochrome b family. As to quaternary structure, the cytochrome bc1 complex contains 3 respiratory subunits (MT-CYB, CYC1 and UQCRFS1), 2 core proteins (UQCRC1 and UQCRC2) and probably 6 low-molecular weight proteins. It depends on heme b as a cofactor.

It localises to the mitochondrion inner membrane. Its function is as follows. Component of the ubiquinol-cytochrome c reductase complex (complex III or cytochrome b-c1 complex) that is part of the mitochondrial respiratory chain. The b-c1 complex mediates electron transfer from ubiquinol to cytochrome c. Contributes to the generation of a proton gradient across the mitochondrial membrane that is then used for ATP synthesis. The sequence is that of Cytochrome b (mt-cyb) from Sphyrna tiburo vespertina (Pacific bonnethead shark).